Consider the following 61-residue polypeptide: Large ribosomal subunit protein uL29 (61 aa).

Belongs to the universal ribosomal protein uL29 family.

The chain is Large ribosomal subunit protein uL29 from Stenotrophomonas maltophilia (strain R551-3).